A 199-amino-acid chain; its full sequence is MASGSGTKNLDFRRKWDKDEYEKLAEKRLTEEREKKDGKPVQPVKRELLRHRDYKVDLESKLGKTIVITKTTPQSEMGGYYCNVCDCVVKDSINFLDHINGKKHQRNLGMSMRVERSTLDQVKKRFEVNKKKMEEKQKDYDFEERMKELREEEEKAKAYKKEKQKEKKRRAEEDLTFEEDDEMAAVMGFSGFGSTKKSY.

Position 2 is an N-acetylalanine (Ala-2). Residues Lys-8, Lys-36, Lys-39, Lys-45, Lys-55, Lys-61, Lys-64, Lys-70, Lys-102, and Lys-123 each participate in a glycyl lysine isopeptide (Lys-Gly) (interchain with G-Cter in SUMO2) cross-link. The segment at 27–46 (KRLTEEREKKDGKPVQPVKR) is disordered. A Matrin-type zinc finger spans residues 80-104 (YYCNVCDCVVKDSINFLDHINGKKH). The segment covering 150 to 173 (REEEEKAKAYKKEKQKEKKRRAEE) has biased composition (basic and acidic residues). The interval 150 to 175 (REEEEKAKAYKKEKQKEKKRRAEEDL) is disordered.

As to quaternary structure, component of the spliceosome B complex.

The protein localises to the nucleus. Its function is as follows. Involved in pre-mRNA splicing as a component of the spliceosome. This chain is Zinc finger matrin-type protein 2 (ZMAT2), found in Homo sapiens (Human).